The primary structure comprises 419 residues: O-methyltransferase gsfB (419 aa).

S-adenosyl-L-methionine is bound by residues 255–256 (GG), Asp-278, 300–301 (DF), and Arg-316. His-320 acts as the Proton acceptor in catalysis.

This sequence belongs to the class I-like SAM-binding methyltransferase superfamily. Cation-independent O-methyltransferase family.

The enzyme catalyses 2-(2,4-dihydroxy-6-oxidobenzoyl)-5-hydroxy-3-methylbenzenolate + S-adenosyl-L-methionine = griseophenone D + S-adenosyl-L-homocysteine + H(+). Its pathway is secondary metabolite biosynthesis; terpenoid biosynthesis. O-methyltransferase; part of the gene cluster that mediates the biosynthesis of griseofulvin, an important antifungal drug that has been in use for a long time for treating dermatophyte infections. The first step of the pathway is the formation of the heptaketide backbone by gsfA which is initiated by priming with acetyl-CoA, followed by sequential condensations of 6 malonyl-CoA units. The resulting benzophenone can undergo a spontaneous dehydration to form norlichexanthone. However, the true precursor for the griseofulvin biosynthesis is not norlichexanthone, but the heptaketide benzophenone that is O-methylated at 3-OH by gsfB to produce griseophenone D which is further methylated at 9-OH by gsfC to yield griseophenone C. Griseophenone C is then substrate of halogenase gsfI which is responsible for the regio-specific chlorination at the C13 position to form griseophenone B. The cytochrome P450 gsfF catalyzes the coupling of orcinol and phloroglucinol rings in griseophenone B to form desmethyl-dehydrogriseofulvin A which is further methylated at 5-OH by gsfD to yield dehydrogriseofulvin. Finally, gsfE performs stereospecific reduction of enone 18 of dehydrogriseofulvin to afford the final product griseofulvin. This is O-methyltransferase gsfB from Penicillium aethiopicum.